The chain runs to 150 residues: Cytochrome c-type biogenesis protein CcmE (150 aa).

Over Met1–Arg9 the chain is Cytoplasmic. A helical; Signal-anchor for type II membrane protein membrane pass occupies residues Ile10–Gly30. The Periplasmic segment spans residues Met31–Gly150. 2 residues coordinate heme: His123 and Tyr127.

The protein belongs to the CcmE/CycJ family.

The protein resides in the cell inner membrane. Functionally, heme chaperone required for the biogenesis of c-type cytochromes. Transiently binds heme delivered by CcmC and transfers the heme to apo-cytochromes in a process facilitated by CcmF and CcmH. The chain is Cytochrome c-type biogenesis protein CcmE from Rhodobacter capsulatus (strain ATCC BAA-309 / NBRC 16581 / SB1003).